Here is a 1121-residue protein sequence, read N- to C-terminus: tRNA (34-2'-O)-methyltransferase regulator WDR6 (1121 aa).

Residue methionine 1 is modified to N-acetylmethionine. 19 WD repeats span residues isoleucine 53–isoleucine 97, tryptophan 105–proline 143, cysteine 147–proline 189, alanine 200–valine 238, arginine 247–histidine 285, isoleucine 289–leucine 327, leucine 335–valine 376, tryptophan 381–isoleucine 422, proline 425–alanine 470, isoleucine 476–serine 520, proline 559–aspartate 598, valine 604–proline 642, histidine 645–alanine 684, leucine 739–isoleucine 785, arginine 848–leucine 893, glutamine 901–leucine 946, glycine 970–leucine 1012, glutamate 1036–leucine 1073, and threonine 1079–aspartate 1121.

This sequence belongs to the WD repeat WDR6 family. In terms of assembly, interacts with FTSJ1; the interaction is direct, and required for 2'-O-methylation of position 34 in substrate tRNAs. Interacts with IRS4. Interacts with STK11/LKB1. As to expression, ubiquitous.

Its subcellular location is the cytoplasm. In terms of biological role, together with methyltransferase FTSJ1, methylates the 2'-O-ribose of nucleotides at position 34 of the tRNA anticodon loop of substrate tRNAs. Required for the correct positioning of the substrate tRNA for methylation. Required to suppress amino acid starvation-induced autophagy. Enhances the STK11/LKB1-induced cell growth suppression activity. The protein is tRNA (34-2'-O)-methyltransferase regulator WDR6 (WDR6) of Homo sapiens (Human).